The primary structure comprises 358 residues: NADH-quinone oxidoreductase subunit H (358 aa).

8 helical membrane-spanning segments follow: residues 20 to 40 (ITVGLVVSVIVKIVIILIPLI), 95 to 115 (ALFYIGPIMSLAPSFAAWAVI), 128 to 148 (IGLLYILMITSLSVYGVIIAG), 168 to 188 (ISYEIAMSAALVCVVMVSGSM), 206 to 226 (VFSWNWLPLFPIFIVYLISAV), 253 to 273 (GFAFALFFLAEYIFMILIAAL), 295 to 315 (TPSAFWMFAKMAAVLYWYLWI), and 334 to 354 (VLIPIGFAYIVILGVWMISPL).

Belongs to the complex I subunit 1 family. NDH-1 is composed of 14 different subunits. Subunits NuoA, H, J, K, L, M, N constitute the membrane sector of the complex.

The protein resides in the cell inner membrane. It catalyses the reaction a quinone + NADH + 5 H(+)(in) = a quinol + NAD(+) + 4 H(+)(out). Functionally, NDH-1 shuttles electrons from NADH, via FMN and iron-sulfur (Fe-S) centers, to quinones in the respiratory chain. The immediate electron acceptor for the enzyme in this species is believed to be ubiquinone. Couples the redox reaction to proton translocation (for every two electrons transferred, four hydrogen ions are translocated across the cytoplasmic membrane), and thus conserves the redox energy in a proton gradient. This subunit may bind ubiquinone. The protein is NADH-quinone oxidoreductase subunit H of Neisseria meningitidis serogroup B (strain ATCC BAA-335 / MC58).